A 270-amino-acid chain; its full sequence is Ribosomal RNA small subunit methyltransferase A (270 aa).

6 residues coordinate S-adenosyl-L-methionine: His11, Leu13, Gly38, Glu59, Asp84, and Asn109.

It belongs to the class I-like SAM-binding methyltransferase superfamily. rRNA adenine N(6)-methyltransferase family. RsmA subfamily.

It localises to the cytoplasm. The catalysed reaction is adenosine(1518)/adenosine(1519) in 16S rRNA + 4 S-adenosyl-L-methionine = N(6)-dimethyladenosine(1518)/N(6)-dimethyladenosine(1519) in 16S rRNA + 4 S-adenosyl-L-homocysteine + 4 H(+). Its function is as follows. Specifically dimethylates two adjacent adenosines (A1518 and A1519) in the loop of a conserved hairpin near the 3'-end of 16S rRNA in the 30S particle. May play a critical role in biogenesis of 30S subunits. In Crocosphaera subtropica (strain ATCC 51142 / BH68) (Cyanothece sp. (strain ATCC 51142)), this protein is Ribosomal RNA small subunit methyltransferase A.